The following is a 137-amino-acid chain: Large ribosomal subunit protein uL16 (137 aa).

This sequence belongs to the universal ribosomal protein uL16 family. In terms of assembly, part of the 50S ribosomal subunit.

Binds 23S rRNA and is also seen to make contacts with the A and possibly P site tRNAs. The chain is Large ribosomal subunit protein uL16 from Roseobacter denitrificans (strain ATCC 33942 / OCh 114) (Erythrobacter sp. (strain OCh 114)).